The following is an 82-amino-acid chain: Small ribosomal subunit protein bS18 (82 aa).

The protein belongs to the bacterial ribosomal protein bS18 family. In terms of assembly, part of the 30S ribosomal subunit. Forms a tight heterodimer with protein bS6.

In terms of biological role, binds as a heterodimer with protein bS6 to the central domain of the 16S rRNA, where it helps stabilize the platform of the 30S subunit. This is Small ribosomal subunit protein bS18 from Chlamydia felis (strain Fe/C-56) (Chlamydophila felis).